The chain runs to 683 residues: Putative boron transporter 5 (683 aa).

The Cytoplasmic segment spans residues 1–38; that stretch reads MEEERVEGSKRPFQGIIRDVKGRALCYKQDWIAGLRSG. A helical membrane pass occupies residues 39 to 59; the sequence is FGILAPTTYVFFASALPVIAF. Residues 60–80 lie on the Extracellular side of the membrane; the sequence is GEQLSHDTERSLSTVETLAST. Residues 81 to 101 form a helical membrane-spanning segment; sequence ALCGVIHSLLGGQPLLILGVA. Topologically, residues 102-126 are cytoplasmic; it reads EPTVLMYKYLYDFAKGRPELGKQLY. A helical transmembrane segment spans residues 127–147; it reads LAWVAWVCVWTALLLFLMAIF. The Extracellular segment spans residues 148 to 158; it reads NMAYIINRFTR. Residues 159–179 form a helical membrane-spanning segment; sequence IAGELFGMLIAVLFLQQTIKG. Residues 180–200 are Cytoplasmic-facing; it reads MVSEFRIPKGEDSKLEKYQFE. The helical transmembrane segment at 201 to 221 threads the bilayer; sequence WLYTNGLLGLIFTVGLVYTAL. At 222–238 the chain is on the extracellular side; that stretch reads KSRKARSWPYGTGCCRS. A helical membrane pass occupies residues 239–259; the sequence is FVADYGVPLMVVVWTALSFST. The Cytoplasmic portion of the chain corresponds to 260–294; sequence PSKLPSGVPRRLVSPLPWDSVSLTHWTVIKDMGKV. A helical transmembrane segment spans residues 295–315; it reads SPGYIFAAFIPALMIAGLYFF. Residues 316–335 lie on the Extracellular side of the membrane; the sequence is DHSVVSQLAQQKEFNLKNPS. The helical transmembrane segment at 336–356 threads the bilayer; the sequence is AYHYDILLLGFMVLICGMLGL. Over 357–477 the chain is Cytoplasmic; that stretch reads PPSNGVLPQS…EQRVSNLLQS (121 aa). The chain crosses the membrane as a helical span at residues 478–498; the sequence is LLVIGAVFALPVIKLIPTSLL. Residues 499-565 are Extracellular-facing; it reads WGYFAYMAID…QILYFGLCYG (67 aa). A helical membrane pass occupies residues 566–586; sequence VTWIPVAGIMFPVLFFLLVAI. The Cytoplasmic segment spans residues 587–683; sequence RQYLLPKLFK…GDGDMSSSRE (97 aa).

The protein belongs to the anion exchanger (TC 2.A.31.3) family.

Its subcellular location is the membrane. In terms of biological role, putative boron transporter. Boron is essential for maintaining the integrity of plants cell walls. The protein is Putative boron transporter 5 (BOR5) of Arabidopsis thaliana (Mouse-ear cress).